We begin with the raw amino-acid sequence, 130 residues long: Small ribosomal subunit protein uS8 (130 aa).

The protein belongs to the universal ribosomal protein uS8 family. As to quaternary structure, part of the 30S ribosomal subunit. Contacts proteins S5 and S12.

One of the primary rRNA binding proteins, it binds directly to 16S rRNA central domain where it helps coordinate assembly of the platform of the 30S subunit. This Neisseria meningitidis serogroup C (strain 053442) protein is Small ribosomal subunit protein uS8.